Here is a 501-residue protein sequence, read N- to C-terminus: G protein-activated inward rectifier potassium channel 1 (501 aa).

The disordered stretch occupies residues 1–40; the sequence is MSALRRKFGDDYQVVTTSSSGSGLQPQGPGQGPQQQLVPK. Residues 1-80 are Cytoplasmic-facing; sequence MSALRRKFGD…LFTTLVDLKW (80 aa). A compositionally biased stretch (low complexity) spans 18-37; it reads SSSGSGLQPQGPGQGPQQQL. A helical membrane pass occupies residues 81–105; sequence RWNLFIFILTYTVAWLFMASMWWVI. The Extracellular portion of the chain corresponds to 106–129; it reads AYTRGDLNKAHVGNYTPCVANVYN. N119 carries N-linked (GlcNAc...) asparagine glycosylation. An intramembrane region (helical; Pore-forming) is located at residues 130–141; it reads FPSAFLFFIETE. Positions 142-148 form an intramembrane region, pore-forming; that stretch reads ATIGYGY. The Selectivity filter signature appears at 143-148; it reads TIGYGY. At 149–157 the chain is on the extracellular side; that stretch reads RYITDKCPE. A helical membrane pass occupies residues 158–179; that stretch reads GIILFLFQSILGSIVDAFLIGC. The Cytoplasmic segment spans residues 180-501; sequence MFIKMSQPKK…LRKMNSDRFT (322 aa). A polyphosphoinositide (PIP2)-binding region spans residues 182–209; the sequence is IKMSQPKKRAETLMFSEHAVISMRDGKL. Residues S385 and S424 each carry the phosphoserine modification. A compositionally biased stretch (polar residues) spans 456 to 467; that stretch reads TKMLSDPMSQSV. The tract at residues 456–501 is disordered; it reads TKMLSDPMSQSVADLPPKLQKMAGGPTRMEGNLPAKLRKMNSDRFT.

The protein belongs to the inward rectifier-type potassium channel (TC 1.A.2.1) family. KCNJ3 subfamily. Associates with KCNJ5/GIRK4 or KCNJ6/GIRK2 to form a G-protein activated heteromultimer pore-forming unit. The resulting inward current is much larger. Associates with KCNJ9/GIRK3 to form a G-protein activated heteromultimer pore-forming unit.

The protein resides in the membrane. The catalysed reaction is K(+)(in) = K(+)(out). With respect to regulation, heteromultimer composed of KCNJ3/GIRK1 and KCNJ5/GIRK4 is activated by phosphatidylinositol 4,5 biphosphate (PtdIns(4,5)P2). In terms of biological role, inward rectifier potassium channels are characterized by a greater tendency to allow potassium to flow into the cell rather than out of it. Their voltage dependence is regulated by the concentration of extracellular potassium; as external potassium is raised, the voltage range of the channel opening shifts to more positive voltages. The inward rectification is mainly due to the blockage of outward current by internal magnesium. This potassium channel is controlled by G proteins. This receptor plays a crucial role in regulating the heartbeat. Forms a functional channel in association with KCNJ9/GIRK3. The sequence is that of G protein-activated inward rectifier potassium channel 1 (Kcnj3) from Rattus norvegicus (Rat).